The primary structure comprises 352 residues: Delta(7)-sterol 5(6)-desaturas erg3A (352 aa).

Asn39 carries N-linked (GlcNAc...) asparagine glycosylation. Transmembrane regions (helical) follow at residues 82–102 (FLSFFLIVWIFGIIVYFISAT), 128–147 (IAQTMRSMPVMSLLTAPFLV), and 167–187 (YYSILQFPLFIAFTDFCIYWI). In terms of domain architecture, Fatty acid hydroxylase spans 174-299 (PLFIAFTDFC…FTTLWDRLGG (126 aa)). The short motif at 188 to 192 (HRGLH) is the Histidine box-1 element. Residues 201–205 (HKPHH) carry the Histidine box-2 motif. A helical membrane pass occupies residues 231-251 (HVFPFIFPLQKLAYVFLFGFI). The Histidine box-3 signature appears at 276–280 (HTMHH).

Belongs to the sterol desaturase family. Requires Fe cation as cofactor.

It is found in the endoplasmic reticulum membrane. Delta(7)-sterol 5(6)-desaturase; part of the third module of ergosterol biosynthesis pathway that includes the late steps of the pathway. Erg3A is a minor delta(7)-sterol 5(6)-desaturase within the ergosterol pathway, erg3B being the major one. The third module or late pathway involves the ergosterol synthesis itself through consecutive reactions that mainly occur in the endoplasmic reticulum (ER) membrane. Firstly, the squalene synthase erg9 catalyzes the condensation of 2 farnesyl pyrophosphate moieties to form squalene, which is the precursor of all steroids. Squalene synthase is crucial for balancing the incorporation of farnesyl diphosphate (FPP) into sterol and nonsterol isoprene synthesis. Secondly, squalene is converted into lanosterol by the consecutive action of the squalene epoxidase erg1 and the lanosterol synthase erg7. Then, the delta(24)-sterol C-methyltransferase erg6 methylates lanosterol at C-24 to produce eburicol. Eburicol is the substrate of the sterol 14-alpha demethylase encoded by cyp51A and cyp51B, to yield 4,4,24-trimethyl ergosta-8,14,24(28)-trienol. The C-14 reductase erg24 then reduces the C14=C15 double bond which leads to 4,4-dimethylfecosterol. A sequence of further demethylations at C-4, involving the C-4 demethylation complex containing the C-4 methylsterol oxidases erg25A or erg25B, the sterol-4-alpha-carboxylate 3-dehydrogenase erg26 and the 3-keto-steroid reductase erg27, leads to the production of fecosterol via 4-methylfecosterol. The C-8 sterol isomerase erg2 then catalyzes the reaction which results in unsaturation at C-7 in the B ring of sterols and thus converts fecosterol to episterol. The sterol-C5-desaturase erg3B then catalyzes the introduction of a C-5 double bond in the B ring to produce 5-dehydroepisterol. The 2 other sterol-C5-desaturases, erg3A and erg3C, seem to be less important in ergosterol biosynthesis. The C-22 sterol desaturase erg5 further converts 5-dehydroepisterol into ergosta-5,7,22,24(28)-tetraen-3beta-ol by forming the C-22(23) double bond in the sterol side chain. Finally, ergosta-5,7,22,24(28)-tetraen-3beta-ol is substrate of the C-24(28) sterol reductases erg4A and erg4B to produce ergosterol. Possible alternative sterol biosynthetic pathways might exist from fecosterol to ergosterol, depending on the activities of the erg3 isoforms. This Aspergillus fumigatus (strain ATCC MYA-4609 / CBS 101355 / FGSC A1100 / Af293) (Neosartorya fumigata) protein is Delta(7)-sterol 5(6)-desaturas erg3A.